A 442-amino-acid chain; its full sequence is Trigger factor (442 aa).

One can recognise a PPIase FKBP-type domain in the interval 162 to 247 (GDQVTIDAIG…IKAVHTSEPT (86 aa)).

The protein belongs to the FKBP-type PPIase family. Tig subfamily.

It localises to the cytoplasm. It carries out the reaction [protein]-peptidylproline (omega=180) = [protein]-peptidylproline (omega=0). Its function is as follows. Involved in protein export. Acts as a chaperone by maintaining the newly synthesized protein in an open conformation. Functions as a peptidyl-prolyl cis-trans isomerase. This chain is Trigger factor, found in Rickettsia canadensis (strain McKiel).